The primary structure comprises 414 residues: Aspartic protease-like protein pynH (414 aa).

The signal sequence occupies residues 1–19 (MFPCSRIWSLLVAAATASA). The region spanning 43–410 (FLTDIALGTP…DFEKLQVGIA (368 aa)) is the Peptidase A1 domain. Asn-93, Asn-102, Asn-140, Asn-151, Asn-173, Asn-202, Asn-221, Asn-258, Asn-272, Asn-335, and Asn-366 each carry an N-linked (GlcNAc...) asparagine glycan. The cysteines at positions 333 and 371 are disulfide-linked.

Belongs to the peptidase A1 family.

Its pathway is secondary metabolite biosynthesis. In terms of biological role, aspartic protease-like protein; part of the gene cluster that mediates the biosynthesis of pyranonigrins, a family of antioxidative compounds. The first step of pyranonigrins biosynthesis is performed by the hybrid PKS-NRPS synthetase that condenses 6 malonyl-CoA units to an acetyl starter unit, to form a 1,3,5-trioxotetradecane-6,8-dienyl-ACP. The enoyl reductase (ER) domain of pynA is likely to be functional during the first two rounds of polyketide chain extension, to generate the saturated C-C bonds of the alkyl side chain. PynA subsequently forms the amide bond between the acyl chain and L-serine. Although pynA has a terminal reductase domain, it appears to require the thioesterase pynI for the release of the straight-chain intermediate from pynA via the formation of a tetramic acid pyranonigrin J. The methyltransferase pynC then coverts pyranonigrin J to pyranonigrin I via N-methylation. The FAD-dependent monooxygenase pynG catalyzes an epoxidation-mediated cyclization to form the dihydro-gamma-pyrone moiety, followed by pynD-catalyzed oxidation of the alcohol to the ketone and enolization to yield the characteristic tetramic acid-fused gamma-pyrone core of pyranonigrin H. Pyranonigrin H is substrate of pynH for dehydration-mediated exo-methylene formation from the serine side chain to produce pyranonigrin E, before the oxidase pynE reduces the exo-methylene of pyranonigrin E into a pendant methyl to form pyranonigrin G. The FAD-linked oxidoreductase pynB performs the reverse reaction and converts pyranonigrin G back to pyranonigrin E. In Aspergillus niger (strain ATCC MYA-4892 / CBS 513.88 / FGSC A1513), this protein is Aspartic protease-like protein pynH.